The primary structure comprises 271 residues: 4-diphosphocytidyl-2-C-methyl-D-erythritol kinase (271 aa).

Lys-8 is a catalytic residue. 90–100 is a binding site for ATP; the sequence is PFGAGLGGGSA. The active site involves Asp-132.

Belongs to the GHMP kinase family. IspE subfamily.

It catalyses the reaction 4-CDP-2-C-methyl-D-erythritol + ATP = 4-CDP-2-C-methyl-D-erythritol 2-phosphate + ADP + H(+). It functions in the pathway isoprenoid biosynthesis; isopentenyl diphosphate biosynthesis via DXP pathway; isopentenyl diphosphate from 1-deoxy-D-xylulose 5-phosphate: step 3/6. Catalyzes the phosphorylation of the position 2 hydroxy group of 4-diphosphocytidyl-2C-methyl-D-erythritol. This is 4-diphosphocytidyl-2-C-methyl-D-erythritol kinase from Parabacteroides distasonis (strain ATCC 8503 / DSM 20701 / CIP 104284 / JCM 5825 / NCTC 11152).